We begin with the raw amino-acid sequence, 194 residues long: MITMRRSMKTRETLETHVKVDLEIDGSGKSSVNTGLGFLDHMLESVARHGLLDLEVEARGDLEVDDHHTVEDVALTLGEALREALGDKSGIRRMAHAMVPMDDALATVALDLSGRPYTVLELEFDDAVIGDVKSQNIGHFIESLAVSAAMNIHASVRGRNDHHKAEALFKALALAIRDAVRVEHGEIPSTKGKL.

It belongs to the imidazoleglycerol-phosphate dehydratase family.

The protein resides in the cytoplasm. The enzyme catalyses D-erythro-1-(imidazol-4-yl)glycerol 3-phosphate = 3-(imidazol-4-yl)-2-oxopropyl phosphate + H2O. Its pathway is amino-acid biosynthesis; L-histidine biosynthesis; L-histidine from 5-phospho-alpha-D-ribose 1-diphosphate: step 6/9. This is Imidazoleglycerol-phosphate dehydratase from Methanothermobacter thermautotrophicus (strain ATCC 29096 / DSM 1053 / JCM 10044 / NBRC 100330 / Delta H) (Methanobacterium thermoautotrophicum).